A 316-amino-acid polypeptide reads, in one-letter code: MEFATTSSRFSKEEEEEEEGEQEMEQEQDEEEEEAEASPREIPFMTSAAAAATASSSSPTSVSPSATASAAASTSASGSPFRSSDGAGASGSGGGGGGEDVEVIEKEHMFDKVVTPSDVGKLNRLVIPKQHAEKYFPLDSAANEKGLLLSFEDRTGKLWRFRYSYWNSSQSYVMTKGWSRFVKEKRLDAGDTVSFCRGAAEATRDRLFIDWKRRADVRDPHRFQRLPLPMTSPYGPWGGGAGASSCRPRRPPRSTSITAFARASTSATSTPLCRRGSSSSSAPQGRGFISTRPCHRRRRHLRLLTNSTLRCTTRAP.

Positions 1–100 (MEFATTSSRF…GSGGGGGGED (100 aa)) are disordered. The span at 13-36 (EEEEEEEGEQEMEQEQDEEEEEAE) shows a compositional bias: acidic residues. Positions 46–77 (TSAAAAATASSSSPTSVSPSATASAAASTSAS) are enriched in low complexity. The span at 88–98 (GASGSGGGGGG) shows a compositional bias: gly residues. Positions 110–215 (FDKVVTPSDV…RLFIDWKRRA (106 aa)) form a DNA-binding region, TF-B3. The tract at residues 239–290 (GGAGASSCRPRRPPRSTSITAFARASTSATSTPLCRRGSSSSSAPQGRGFIS) is disordered. Positions 253–270 (RSTSITAFARASTSATST) are enriched in low complexity.

The protein resides in the nucleus. The polypeptide is B3 domain-containing protein Os04g0581400 (Oryza sativa subsp. japonica (Rice)).